Reading from the N-terminus, the 54-residue chain is H-bracotoxin-Cf4 (54 aa).

Positions 1-21 are cleaved as a signal peptide; it reads MSKLFIFFLLVALLAFVSSEA. Intrachain disulfides connect C24–C39, C31–C43, and C38–C53.

As to expression, expressed by the venom duct.

The protein localises to the secreted. Its function is as follows. This endoparasitoid wasp peptide has a role in disruption of the cellular host immune response, since it reduces the capacity of D.saccharalis hemocytes to encapsulate foreign bodies. On the other hand, it shows no effect on the humoral immune response, since it has no effect on phenoloxidase activity. The protein is H-bracotoxin-Cf4 of Cotesia flavipes (Parasitic wasp).